We begin with the raw amino-acid sequence, 185 residues long: Large ribosomal subunit protein uL5m (185 aa).

The protein belongs to the universal ribosomal protein uL5 family. As to quaternary structure, component of the mitochondrial ribosome large subunit.

It is found in the mitochondrion. This is Large ribosomal subunit protein uL5m (RPL5) from Arabidopsis thaliana (Mouse-ear cress).